We begin with the raw amino-acid sequence, 607 residues long: Phosphoenolpyruvate carboxykinase [GTP] (607 aa).

Residues Arg-81 and 221 to 223 contribute to the substrate site; that span reads YGG. Mn(2+)-binding residues include Lys-230 and His-250. Ser-272 provides a ligand contact to substrate. 273 to 278 provides a ligand contact to GTP; the sequence is ACGKTN. The active site involves Cys-274. Asp-297 contributes to the Mn(2+) binding site. 388–390 is a binding site for substrate; that stretch reads NSR. GTP-binding positions include Arg-390, Arg-421, and 516-519; that span reads FGDN.

It belongs to the phosphoenolpyruvate carboxykinase [GTP] family. Monomer. The cofactor is Mn(2+).

The protein resides in the cytoplasm. The enzyme catalyses oxaloacetate + GTP = phosphoenolpyruvate + GDP + CO2. It functions in the pathway carbohydrate biosynthesis; gluconeogenesis. Catalyzes the conversion of oxaloacetate (OAA) to phosphoenolpyruvate (PEP), the rate-limiting step in the metabolic pathway that produces glucose from lactate and other precursors derived from the citric acid cycle. This is Phosphoenolpyruvate carboxykinase [GTP] from Renibacterium salmoninarum (strain ATCC 33209 / DSM 20767 / JCM 11484 / NBRC 15589 / NCIMB 2235).